Here is a 194-residue protein sequence, read N- to C-terminus: Outer-membrane lipoprotein LolB (194 aa).

The signal sequence occupies residues 1–18 (MTLFLRIFTFGCLLLLAG). Cys19 carries N-palmitoyl cysteine lipidation. Cys19 is lipidated: S-diacylglycerol cysteine.

This sequence belongs to the LolB family. In terms of assembly, monomer.

The protein resides in the cell outer membrane. Its function is as follows. Plays a critical role in the incorporation of lipoproteins in the outer membrane after they are released by the LolA protein. The sequence is that of Outer-membrane lipoprotein LolB from Aeromonas salmonicida (strain A449).